A 625-amino-acid chain; its full sequence is tRNA uridine 5-carboxymethylaminomethyl modification enzyme MnmG (625 aa).

Residues 13 to 18, valine 125, and serine 182 contribute to the FAD site; that span reads GGGHAG. Residue 276–290 coordinates NAD(+); it reads GPRYCPSIEDKITRF. Glutamine 373 contributes to the FAD binding site.

The protein belongs to the MnmG family. Homodimer. Heterotetramer of two MnmE and two MnmG subunits. Requires FAD as cofactor.

Its subcellular location is the cytoplasm. Functionally, NAD-binding protein involved in the addition of a carboxymethylaminomethyl (cmnm) group at the wobble position (U34) of certain tRNAs, forming tRNA-cmnm(5)s(2)U34. This Lactococcus lactis subsp. cremoris (strain MG1363) protein is tRNA uridine 5-carboxymethylaminomethyl modification enzyme MnmG.